The sequence spans 254 residues: Photosystem II 22 kDa protein 2, chloroplastic (254 aa).

A chloroplast-targeting transit peptide spans 1-38 (MALQQSMAMPMMVVSDLGTAPRSSPMVQLQRMKKHLVV). Repeat copies occupy residues 42–148 (FKSR…FVDD) and 149–253 (ATGL…DNDD). 4 helical membrane-spanning segments follow: residues 86–106 (VAMLGFAASLLGEAVTGKGIL), 120–140 (AEPLLLFFILFTLLGAIGALG), 184–204 (LFVGRLAQLGIAFSLIGEIIT), and 219–239 (PINEIEPLLLFNILFFFFAAI).

This sequence belongs to the ELIP/psbS family.

It is found in the plastid. The protein resides in the chloroplast thylakoid membrane. Its function is as follows. Involved in high light-mediated energy-dependent nonphotochemical quenching (NPQ, qE) and thermal dissipation (TD) thus regulating energy conversion in photosystem II and protecting from photoinhibition. Also seems to regulate quantum yield of electron transport in fluctuating light conditions. This is Photosystem II 22 kDa protein 2, chloroplastic from Oryza sativa subsp. japonica (Rice).